Consider the following 331-residue polypeptide: UPF0329 protein ECU01_0080/ECU01_1530/ECU02_1560/ECU04_0090/ECU08_0010/ECU08_2090 (331 aa).

The span at 305-320 (QRSEMEKRDREQDPER) shows a compositional bias: basic and acidic residues. A disordered region spans residues 305-331 (QRSEMEKRDREQDPERRRLRARRVGSL). Positions 321 to 331 (RRLRARRVGSL) are enriched in basic residues.

This sequence belongs to the UPF0329 family.

The protein is UPF0329 protein ECU01_0080/ECU01_1530/ECU02_1560/ECU04_0090/ECU08_0010/ECU08_2090 of Encephalitozoon cuniculi (strain GB-M1) (Microsporidian parasite).